The chain runs to 303 residues: Porphobilinogen deaminase (303 aa).

Cys-240 is modified (S-(dipyrrolylmethanemethyl)cysteine).

It belongs to the HMBS family. Monomer. Dipyrromethane is required as a cofactor.

The catalysed reaction is 4 porphobilinogen + H2O = hydroxymethylbilane + 4 NH4(+). Its pathway is porphyrin-containing compound metabolism; protoporphyrin-IX biosynthesis; coproporphyrinogen-III from 5-aminolevulinate: step 2/4. Functionally, tetrapolymerization of the monopyrrole PBG into the hydroxymethylbilane pre-uroporphyrinogen in several discrete steps. This chain is Porphobilinogen deaminase, found in Stenotrophomonas maltophilia (strain R551-3).